The sequence spans 350 residues: Nicotinate-nucleotide--dimethylbenzimidazole phosphoribosyltransferase (350 aa).

Glu317 functions as the Proton acceptor in the catalytic mechanism.

This sequence belongs to the CobT family.

It carries out the reaction 5,6-dimethylbenzimidazole + nicotinate beta-D-ribonucleotide = alpha-ribazole 5'-phosphate + nicotinate + H(+). The protein operates within nucleoside biosynthesis; alpha-ribazole biosynthesis; alpha-ribazole from 5,6-dimethylbenzimidazole: step 1/2. Its function is as follows. Catalyzes the synthesis of alpha-ribazole-5'-phosphate from nicotinate mononucleotide (NAMN) and 5,6-dimethylbenzimidazole (DMB). The polypeptide is Nicotinate-nucleotide--dimethylbenzimidazole phosphoribosyltransferase (Shewanella oneidensis (strain ATCC 700550 / JCM 31522 / CIP 106686 / LMG 19005 / NCIMB 14063 / MR-1)).